Here is a 172-residue protein sequence, read N- to C-terminus: Small ribosomal subunit protein uS5 (172 aa).

The S5 DRBM domain occupies 17-80 (LKEKMIAINR…EEARRNMTKV (64 aa)).

The protein belongs to the universal ribosomal protein uS5 family. As to quaternary structure, part of the 30S ribosomal subunit. Contacts proteins S4 and S8.

Functionally, with S4 and S12 plays an important role in translational accuracy. Its function is as follows. Located at the back of the 30S subunit body where it stabilizes the conformation of the head with respect to the body. This Polaromonas naphthalenivorans (strain CJ2) protein is Small ribosomal subunit protein uS5.